We begin with the raw amino-acid sequence, 234 residues long: Nuclear ubiquitous casein and cyclin-dependent kinase substrate 1 (234 aa).

Positions 1–234 are disordered; sequence MSRPVRNRKV…SEDEASSGED (234 aa). A Phosphotyrosine modification is found at Tyr13. Residues Ser14 and Ser19 each carry the phosphoserine modification. Tyr26 bears the Phosphotyrosine mark. Residues 35–51 are compositionally biased toward basic residues; sequence KKIRSSPREAKNKRRSG. Ser54, Ser58, Ser61, Ser73, Ser75, and Ser79 each carry phosphoserine. Basic and acidic residues predominate over residues 64–77; sequence KDVKTKKDDSHSAE. Residues 91-100 are compositionally biased toward low complexity; the sequence is QQRQAASKAA. A compositionally biased stretch (acidic residues) spans 111–124; the sequence is VGSEEEPEEDDEAP. Phosphoserine occurs at positions 113, 130, 132, and 144. The span at 132–145 shows a compositional bias: acidic residues; that stretch reads SDEDFLMEDDDDSD. The span at 149 to 174 shows a compositional bias: basic residues; the sequence is SKKKNKKMVKKSKPERKEKKMPKPRL. A Phosphothreonine modification is found at Thr179. Ser181 is modified (phosphoserine). A compositionally biased stretch (basic residues) spans 185–199; it reads GKAKVGRPTASKKSK. A Phosphothreonine modification is found at Thr202. Ser204, Ser214, Ser225, and Ser231 each carry phosphoserine. The span at 223 to 234 shows a compositional bias: acidic residues; sequence EGSEDEASSGED.

Does not interact with RAD51. Phosphorylated in an ATM-dependent manner in response to DNA damage. Phosphorylated by CDK1 and casein kinase.

It is found in the nucleus. The protein localises to the chromosome. In terms of biological role, chromatin-associated protein involved in DNA repair by promoting homologous recombination (HR). Binds double-stranded DNA (dsDNA) and secondary DNA structures, such as D-loop structures, but with less affinity than RAD51AP1. The polypeptide is Nuclear ubiquitous casein and cyclin-dependent kinase substrate 1 (Nucks1) (Mus musculus (Mouse)).